We begin with the raw amino-acid sequence, 248 residues long: Triosephosphate isomerase (248 aa).

Substrate contacts are provided by Asn11 and Lys13. His95 (electrophile) is an active-site residue. Glu165 serves as the catalytic Proton acceptor.

The protein belongs to the triosephosphate isomerase family. Homodimer.

The protein localises to the cytoplasm. It catalyses the reaction dihydroxyacetone phosphate = methylglyoxal + phosphate. It carries out the reaction D-glyceraldehyde 3-phosphate = dihydroxyacetone phosphate. Its pathway is carbohydrate degradation; glycolysis; D-glyceraldehyde 3-phosphate from glycerone phosphate: step 1/1. It functions in the pathway carbohydrate biosynthesis; gluconeogenesis. Triosephosphate isomerase is an extremely efficient metabolic enzyme that catalyzes the interconversion between dihydroxyacetone phosphate (DHAP) and D-glyceraldehyde-3-phosphate (G3P) in glycolysis and gluconeogenesis. Functionally, it is also responsible for the non-negligible production of methylglyoxal a reactive cytotoxic side-product that modifies and can alter proteins, DNA and lipids. This chain is Triosephosphate isomerase (tpi1), found in Xenopus laevis (African clawed frog).